The chain runs to 624 residues: FAD-dependent monooxygenase apdD (624 aa).

Positions 73 and 359 each coordinate FAD.

It belongs to the paxM FAD-dependent monooxygenase family. The cofactor is FAD.

It participates in secondary metabolite biosynthesis. In terms of biological role, FAD-dependent monooxygenase; part of the gene cluster that mediates the biosynthesis of aspyridones. The polyketide-amino acid backbone preaspyridone A is first assembled by the PKS-NRPS hybrid apdA. The assembly of preaspyridone A is initiated by loading of malonyl-CoA onto apdA, followed by decarboxylation to yield the acetyl starter unit. The growing polyketide chain then elongates into a tetraketide. The adpA PKS module catalyzes three Claisen condensations, as well as beta-keto processing and methylation. Alpha-methylation step during polyketide synthesis is a prerequisite and a key checkpoint for chain transfer between PKS and NRPS modules. The downstream NRPS module contains the condensation (C), adenylation (A), and thiolation (T) domains and catalyzes the incorporation of tyrosine via the formation of the L-tyrosinyl-thioester and the amide linkage between L-tyrosinyl-thioester and the tetraketide. The bimodular assembly line is terminated with a reductase (R) domain that facilitates formation and release of the tetramic acid product. Because apdA lacks a designated enoylreductase (ER) domain, the required activity is provided the enoyl reductase apdC. ApdC appears to operate with different stereoselectivity in different PKS cycle. Combined with apdC, apdA is proposed to synthesize preaspyridone A via about 20 enzymatic steps. A number of oxidative steps performed successively by the cytochrome P450 monooxygenases apdE and apdB are required for the conversion of preaspyridone A to aspyridone A. The cytochrome P450 monooxygenase apdE is responsible for the oxidative dephenylation of preaspyridone A. Finally, the predicted FAD-dependent monooxygenase apdD and the acyl-CoA dehydrogenase apdG may be involved in the transformation of aspyridone A into aspyridone B. The protein is FAD-dependent monooxygenase apdD of Emericella nidulans (strain FGSC A4 / ATCC 38163 / CBS 112.46 / NRRL 194 / M139) (Aspergillus nidulans).